We begin with the raw amino-acid sequence, 232 residues long: tRNA (guanine-N(1)-)-methyltransferase (232 aa).

S-adenosyl-L-methionine contacts are provided by residues Gly112 and 132–137 (IGDYIL).

This sequence belongs to the RNA methyltransferase TrmD family. Homodimer.

It localises to the cytoplasm. The enzyme catalyses guanosine(37) in tRNA + S-adenosyl-L-methionine = N(1)-methylguanosine(37) in tRNA + S-adenosyl-L-homocysteine + H(+). Specifically methylates guanosine-37 in various tRNAs. The chain is tRNA (guanine-N(1)-)-methyltransferase from Methylacidiphilum infernorum (isolate V4) (Methylokorus infernorum (strain V4)).